The primary structure comprises 172 residues: MTKENYFKVGTIVNTHGIRGEVKIMAITDFAADRFKKGAALQIETKQGFVPVTVQSSRLHKNMWLVLFEGVTNINEIEKYKTNDIYVYGEAREALGDDEYYYDEIIDSRVVSLSGEAIGVVSEIMTTGANDVWVVKRPGQSDALIPMIDDVVKSVDVANKLITIDVLEGLLD.

A PRC barrel domain is found at 97–170 (DDEYYYDEII…LITIDVLEGL (74 aa)).

The protein belongs to the RimM family. In terms of assembly, binds ribosomal protein uS19.

It localises to the cytoplasm. Its function is as follows. An accessory protein needed during the final step in the assembly of 30S ribosomal subunit, possibly for assembly of the head region. Essential for efficient processing of 16S rRNA. May be needed both before and after RbfA during the maturation of 16S rRNA. It has affinity for free ribosomal 30S subunits but not for 70S ribosomes. This chain is Ribosome maturation factor RimM, found in Leuconostoc citreum (strain KM20).